A 250-amino-acid polypeptide reads, in one-letter code: DNA repair protein RecO (250 aa).

This sequence belongs to the RecO family.

In terms of biological role, involved in DNA repair and RecF pathway recombination. This Staphylococcus aureus (strain MRSA252) protein is DNA repair protein RecO.